Here is a 217-residue protein sequence, read N- to C-terminus: 3,4-dihydroxy-2-butanone 4-phosphate synthase (217 aa).

D-ribulose 5-phosphate contacts are provided by residues 37-38 (RE), D42, 150-154 (RRGHT), and E174. E38 is a Mg(2+) binding site. H153 serves as a coordination point for Mg(2+).

It belongs to the DHBP synthase family. In terms of assembly, homodimer. Requires Mg(2+) as cofactor. Mn(2+) serves as cofactor.

It carries out the reaction D-ribulose 5-phosphate = (2S)-2-hydroxy-3-oxobutyl phosphate + formate + H(+). It participates in cofactor biosynthesis; riboflavin biosynthesis; 2-hydroxy-3-oxobutyl phosphate from D-ribulose 5-phosphate: step 1/1. In terms of biological role, catalyzes the conversion of D-ribulose 5-phosphate to formate and 3,4-dihydroxy-2-butanone 4-phosphate. The chain is 3,4-dihydroxy-2-butanone 4-phosphate synthase from Desulforapulum autotrophicum (strain ATCC 43914 / DSM 3382 / VKM B-1955 / HRM2) (Desulfobacterium autotrophicum).